A 419-amino-acid polypeptide reads, in one-letter code: Gamma-glutamyl phosphate reductase (419 aa).

Belongs to the gamma-glutamyl phosphate reductase family.

The protein localises to the cytoplasm. The catalysed reaction is L-glutamate 5-semialdehyde + phosphate + NADP(+) = L-glutamyl 5-phosphate + NADPH + H(+). It functions in the pathway amino-acid biosynthesis; L-proline biosynthesis; L-glutamate 5-semialdehyde from L-glutamate: step 2/2. Functionally, catalyzes the NADPH-dependent reduction of L-glutamate 5-phosphate into L-glutamate 5-semialdehyde and phosphate. The product spontaneously undergoes cyclization to form 1-pyrroline-5-carboxylate. The sequence is that of Gamma-glutamyl phosphate reductase from Gloeobacter violaceus (strain ATCC 29082 / PCC 7421).